Consider the following 365-residue polypeptide: Serine/threonine-protein kinase SAPK6 (365 aa).

The 257-residue stretch at 4 to 260 (YELLKDIGSG…IREIRNHPWF (257 aa)) folds into the Protein kinase domain. ATP-binding positions include 10–18 (IGSGNFGVA) and Lys-33. Residue Asp-123 is the Proton acceptor of the active site. The interval 298 to 365 (VQEAKTPPPS…AHASCDLQKS (68 aa)) is disordered. Over residues 317 to 347 (TEEEEQEDGKNPDDDEGDRDEEEGEEGDSED) the composition is skewed to acidic residues.

Belongs to the protein kinase superfamily. Ser/Thr protein kinase family. As to quaternary structure, interacts with BZIP46. May be phosphorylated. Expressed in leaf blades and leaf sheaths. Expressed in shoots and roots of young seedlings.

The catalysed reaction is L-seryl-[protein] + ATP = O-phospho-L-seryl-[protein] + ADP + H(+). It carries out the reaction L-threonyl-[protein] + ATP = O-phospho-L-threonyl-[protein] + ADP + H(+). Activated by hyperosmotic stress. Its function is as follows. May play a role in signal transduction of hyperosmotic response. Can phosphorylate ABI5 in vitro. Can phosphorylate BZIP46 in vitro. In Oryza sativa subsp. japonica (Rice), this protein is Serine/threonine-protein kinase SAPK6.